A 273-amino-acid polypeptide reads, in one-letter code: Energy-coupling factor transporter ATP-binding protein EcfA (273 aa).

The 236-residue stretch at 2–237 (ISIRDLTYFY…RASLLALGLA (236 aa)) folds into the ABC transporter domain. Residue 36–43 (GRNGSGKS) participates in ATP binding.

This sequence belongs to the ABC transporter superfamily. Energy-coupling factor EcfA family. As to quaternary structure, forms a stable energy-coupling factor (ECF) transporter complex composed of 2 membrane-embedded substrate-binding proteins (S component), 2 ATP-binding proteins (A component) and 2 transmembrane proteins (T component).

It is found in the cell membrane. Functionally, ATP-binding (A) component of a common energy-coupling factor (ECF) ABC-transporter complex. Unlike classic ABC transporters this ECF transporter provides the energy necessary to transport a number of different substrates. This chain is Energy-coupling factor transporter ATP-binding protein EcfA, found in Syntrophomonas wolfei subsp. wolfei (strain DSM 2245B / Goettingen).